Consider the following 120-residue polypeptide: U13-lycotoxin-Ls1e (120 aa).

Residues Met1–Cys16 form the signal peptide. Positions Phe17–Arg54 are excised as a propeptide. Intrachain disulfides connect Cys56-Cys70, Cys63-Cys76, Cys69-Cys87, and Cys78-Cys85. Positions Cys56–Cys95 constitute an Agouti domain.

The protein belongs to the neurotoxin 05 (agouti) family. Contains 6 disulfide bonds. In terms of tissue distribution, expressed by the venom gland.

It is found in the secreted. The sequence is that of U13-lycotoxin-Ls1e from Lycosa singoriensis (Wolf spider).